Here is a 176-residue protein sequence, read N- to C-terminus: RNA pyrophosphohydrolase (176 aa).

In terms of domain architecture, Nudix hydrolase spans 6 to 149 (GYRPNVGIII…KRNVYEMALT (144 aa)). The Nudix box signature appears at 38–59 (GGIKPGESPEAAMYRELMEEVG).

The protein belongs to the Nudix hydrolase family. RppH subfamily. A divalent metal cation is required as a cofactor.

Its function is as follows. Accelerates the degradation of transcripts by removing pyrophosphate from the 5'-end of triphosphorylated RNA, leading to a more labile monophosphorylated state that can stimulate subsequent ribonuclease cleavage. This is RNA pyrophosphohydrolase from Laribacter hongkongensis (strain HLHK9).